The following is a 1357-amino-acid chain: DNA-directed RNA polymerase subunit beta (1357 aa).

Belongs to the RNA polymerase beta chain family. The RNAP catalytic core consists of 2 alpha, 1 beta, 1 beta' and 1 omega subunit. When a sigma factor is associated with the core the holoenzyme is formed, which can initiate transcription.

It catalyses the reaction RNA(n) + a ribonucleoside 5'-triphosphate = RNA(n+1) + diphosphate. DNA-dependent RNA polymerase catalyzes the transcription of DNA into RNA using the four ribonucleoside triphosphates as substrates. The polypeptide is DNA-directed RNA polymerase subunit beta (Pseudomonas aeruginosa (strain LESB58)).